The sequence spans 443 residues: Ribulose bisphosphate carboxylase large chain (443 aa).

Substrate contacts are provided by asparagine 89 and threonine 139. The Proton acceptor role is filled by lysine 141. A substrate-binding site is contributed by lysine 143. 3 residues coordinate Mg(2+): lysine 167, aspartate 169, and glutamate 170. The residue at position 167 (lysine 167) is an N6-carboxylysine. The active-site Proton acceptor is histidine 260. Positions 261, 293, and 345 each coordinate substrate.

This sequence belongs to the RuBisCO large chain family. Type I subfamily. As to quaternary structure, heterohexadecamer of 8 large chains and 8 small chains; disulfide-linked. The disulfide link is formed within the large subunit homodimers. Mg(2+) serves as cofactor. The disulfide bond which can form in the large chain dimeric partners within the hexadecamer appears to be associated with oxidative stress and protein turnover.

It localises to the plastid. It is found in the chloroplast. It carries out the reaction 2 (2R)-3-phosphoglycerate + 2 H(+) = D-ribulose 1,5-bisphosphate + CO2 + H2O. It catalyses the reaction D-ribulose 1,5-bisphosphate + O2 = 2-phosphoglycolate + (2R)-3-phosphoglycerate + 2 H(+). RuBisCO catalyzes two reactions: the carboxylation of D-ribulose 1,5-bisphosphate, the primary event in carbon dioxide fixation, as well as the oxidative fragmentation of the pentose substrate in the photorespiration process. Both reactions occur simultaneously and in competition at the same active site. This is Ribulose bisphosphate carboxylase large chain from Verbena bonariensis (Argentinian vervain).